The chain runs to 512 residues: Endoglucanase 14 (512 aa).

The N-terminal stretch at 1 to 22 is a signal peptide; the sequence is MLAAAIELVVIATSCMVRDAHG. An N-linked (GlcNAc...) asparagine glycan is attached at N76. The Nucleophile role is filled by D103. N192 and N215 each carry an N-linked (GlcNAc...) asparagine glycan. Active-site residues include H433, D484, and E493.

Belongs to the glycosyl hydrolase 9 (cellulase E) family.

The protein resides in the secreted. The catalysed reaction is Endohydrolysis of (1-&gt;4)-beta-D-glucosidic linkages in cellulose, lichenin and cereal beta-D-glucans.. This chain is Endoglucanase 14, found in Oryza sativa subsp. japonica (Rice).